A 550-amino-acid chain; its full sequence is Endonuclease/exonuclease/phosphatase family domain-containing protein 1 (550 aa).

Residues 39-68 (ERLNINTATEEELMTLPGVNRGVAQNIVEY) enclose the HhH domain. Residues 194–213 (STNTNGGFTHPSPTSFSVQS) show a composition bias toward polar residues. The interval 194–216 (STNTNGGFTHPSPTSFSVQSDEP) is disordered.

In Danio rerio (Zebrafish), this protein is Endonuclease/exonuclease/phosphatase family domain-containing protein 1 (eepd1).